The following is a 199-amino-acid chain: ATP-dependent Clp protease proteolytic subunit (199 aa).

Ser-97 functions as the Nucleophile in the catalytic mechanism. His-122 is a catalytic residue.

The protein belongs to the peptidase S14 family. As to quaternary structure, fourteen ClpP subunits assemble into 2 heptameric rings which stack back to back to give a disk-like structure with a central cavity, resembling the structure of eukaryotic proteasomes.

The protein localises to the cytoplasm. It carries out the reaction Hydrolysis of proteins to small peptides in the presence of ATP and magnesium. alpha-casein is the usual test substrate. In the absence of ATP, only oligopeptides shorter than five residues are hydrolyzed (such as succinyl-Leu-Tyr-|-NHMec, and Leu-Tyr-Leu-|-Tyr-Trp, in which cleavage of the -Tyr-|-Leu- and -Tyr-|-Trp bonds also occurs).. Functionally, cleaves peptides in various proteins in a process that requires ATP hydrolysis. Has a chymotrypsin-like activity. Plays a major role in the degradation of misfolded proteins. The protein is ATP-dependent Clp protease proteolytic subunit of Citrifermentans bemidjiense (strain ATCC BAA-1014 / DSM 16622 / JCM 12645 / Bem) (Geobacter bemidjiensis).